Reading from the N-terminus, the 29-residue chain is Ranatuerin-2SEa (29 aa).

Cysteine 23 and cysteine 29 are joined by a disulfide.

Expressed by the skin glands.

The protein localises to the secreted. Functionally, mast cell degranulating peptide. Causes histamine release from rat peritoneal mast cells in vitro. Has antibacterial activity against the Gram-negative bacterium E.coli K12 and Gram-positive bacterium M.luteus NCT C2665. The polypeptide is Ranatuerin-2SEa (Lithobates sevosus (Dusky gopher frog)).